The primary structure comprises 233 residues: Glutathione S-transferase U15 (233 aa).

Residues 5-85 (EEVKLLGTWY…YIDETWNSSG (81 aa)) form the GST N-terminal domain. Residues 15-16 (SP), 42-43 (SK), 56-57 (KV), and 69-70 (VS) each bind glutathione. A GST C-terminal domain is found at 92–219 (HPYDRALARF…VPDIDKVAKF (128 aa)). The residue at position 158 (Thr158) is a Phosphothreonine.

The protein belongs to the GST superfamily. Tau family.

The protein resides in the cytoplasm. It localises to the cytosol. The enzyme catalyses RX + glutathione = an S-substituted glutathione + a halide anion + H(+). Functionally, may be involved in the conjugation of reduced glutathione to a wide number of exogenous and endogenous hydrophobic electrophiles and have a detoxification role against certain herbicides. The polypeptide is Glutathione S-transferase U15 (GSTU15) (Arabidopsis thaliana (Mouse-ear cress)).